A 1453-amino-acid polypeptide reads, in one-letter code: NRPS-like tryptophan epimerase fscC (1453 aa).

The tract at residues 37 to 433 (SYGELSAMSS…ATHLIRNCVV (397 aa)) is adenylation. In terms of domain architecture, Carrier spans 544-626 (TGSRQSTRHK…LFHTSKSRFT (83 aa)). O-(pantetheine 4'-phosphoryl)serine is present on Ser-586. The tract at residues 639 to 1053 (FPLSPVQRFF…KDVLESAGVF (415 aa)) is epimerization (E) domain. Positions 1181-1391 (FFGLQSNERA…AGSSLHQHNQ (211 aa)) are condensation.

It belongs to the NRP synthetase family. The cofactor is pantetheine 4'-phosphate.

The protein operates within secondary metabolite biosynthesis. In terms of biological role, NRPS-like tryptophan epimerase; part of the fragmented gene cluster that mediates the biosynthesis of fusarochromene, a tryptophan-derived metabolite closely related to a group of mycotoxins including fusarochromanone. Within the pathway, fscC catalyzes the first step via epimerization of L-tryptophan to provide the intermediate D-tryptophan. D-tryptophan is subsequently hydroxylated by the tryptophan 6-hydroxylase fscE to yield 6-hydroxytryptophan. The pyrrole ring undergoes cleavaged by the tryptophan 2,3-dioxygenase fscD and is finally converted to 4-hydroxykyrunenine by the hydrolase fscH. The NRPS-like oxidoreductase fscA reduces the carboxyl group to primary alcohol and the DMATS-type prenyltransferase fscG performs prenylation, followed by the formation of a chromene ring catalyzed by the oxidoreductase fscI, which leads to desacetylfusarochromene. Epoxidation by fscF and rearrangement reactions of chromene double bonds convert compound desacetylfusarochromene to fusarochromanones. Although specific acetyltransferases were not found near the fsc gene cluster, several predicted enzymes containing the N-acetyltransferase superfamily domain are present in the genome of F.equiseti. These predicted enzymes may have the potential to convert desacetylfusarochromene to fusarochromene. The sequence is that of NRPS-like tryptophan epimerase fscC from Fusarium equiseti (Fusarium scirpi).